The sequence spans 335 residues: Ig gamma-2A chain C region secreted form (335 aa).

3 consecutive Ig-like domains span residues 6-98, 126-225, and 234-330; these read PSVY…KKIE, PSVF…KTIS, and PQVY…KTIS. The N-linked (GlcNAc...) asparagine glycan is linked to asparagine 185.

It is found in the secreted. The chain is Ig gamma-2A chain C region secreted form from Mus musculus (Mouse).